A 225-amino-acid chain; its full sequence is tRNA (guanine-N(7)-)-methyltransferase (225 aa).

E56, E81, D108, and D131 together coordinate S-adenosyl-L-methionine. Residue D131 is part of the active site. Substrate-binding positions include K135, D167, and 204 to 207 (TKFE).

It belongs to the class I-like SAM-binding methyltransferase superfamily. TrmB family.

It catalyses the reaction guanosine(46) in tRNA + S-adenosyl-L-methionine = N(7)-methylguanosine(46) in tRNA + S-adenosyl-L-homocysteine. Its pathway is tRNA modification; N(7)-methylguanine-tRNA biosynthesis. Its function is as follows. Catalyzes the formation of N(7)-methylguanine at position 46 (m7G46) in tRNA. The sequence is that of tRNA (guanine-N(7)-)-methyltransferase from Legionella pneumophila (strain Corby).